Consider the following 349-residue polypeptide: S-adenosylmethionine:tRNA ribosyltransferase-isomerase (349 aa).

Belongs to the QueA family. In terms of assembly, monomer.

The protein localises to the cytoplasm. The catalysed reaction is 7-aminomethyl-7-carbaguanosine(34) in tRNA + S-adenosyl-L-methionine = epoxyqueuosine(34) in tRNA + adenine + L-methionine + 2 H(+). It functions in the pathway tRNA modification; tRNA-queuosine biosynthesis. Functionally, transfers and isomerizes the ribose moiety from AdoMet to the 7-aminomethyl group of 7-deazaguanine (preQ1-tRNA) to give epoxyqueuosine (oQ-tRNA). This Pseudomonas entomophila (strain L48) protein is S-adenosylmethionine:tRNA ribosyltransferase-isomerase.